Consider the following 629-residue polypeptide: Long-chain-fatty-acid--AMP ligase FadD32 (629 aa).

ATP-binding positions include 186 to 191 (TSGSTR), Ser341, Ala345, Asp468, and Arg482.

This sequence belongs to the ATP-dependent AMP-binding enzyme family. As to quaternary structure, monomer.

The catalysed reaction is a long-chain fatty acid + holo-[ACP] + ATP = a long-chain fatty acyl-[ACP] + AMP + diphosphate. It carries out the reaction dodecanoate + ATP + H(+) = dodecanoyl-AMP + diphosphate. It catalyses the reaction tetradecanoate + ATP + H(+) = tetradecanoyl-AMP + diphosphate. The protein operates within lipid metabolism; mycolic acid biosynthesis. The acyl-AMP ligase activity is inhibited by the alkylphosphate esters of AMP, adenosine 50-dodecylphosphate (AMPC12) and eicosyl-AMP (AMPC20). Involved in the biosynthesis of mycolic acids. Catalyzes the activation of long-chain fatty acids as acyl-adenylates (acyl-AMP), which are then transferred to the phosphopantetheine arm of the polyketide synthase Pks13 for further chain extension. Can use dodecanoate (C12) and tetradecanoate (C14). In Mycobacterium marinum (strain ATCC BAA-535 / M), this protein is Long-chain-fatty-acid--AMP ligase FadD32 (fadD32).